We begin with the raw amino-acid sequence, 552 residues long: Rhodopsin kinase GRK7 (552 aa).

Position 36 is a phosphoserine; by PKA (serine 36). In terms of domain architecture, RGS spans 56–176 (FHSLCEQQPI…LASPFYDKFL (121 aa)). One can recognise a Protein kinase domain in the interval 191–454 (FEEFRVLGKG…SDDPRKHHFF (264 aa)). ATP is bound by residues 197–205 (LGKGGFGEV) and lysine 220. Residue aspartate 316 is the Proton acceptor of the active site. One can recognise an AGC-kinase C-terminal domain in the interval 455–520 (KTINFPRLEA…GAVPIAWQEE (66 aa)). The residue at position 549 (cysteine 549) is a Cysteine methyl ester. Cysteine 549 carries the S-geranylgeranyl cysteine lipid modification. A propeptide spans 550 to 552 (LLL) (removed in mature form).

This sequence belongs to the protein kinase superfamily. AGC Ser/Thr protein kinase family. GPRK subfamily. As to quaternary structure, interacts (when prenylated) with PDE6D; this promotes release from membranes. Post-translationally, autophosphorylated in vitro at Ser-490. Phosphorylation at Ser-36 is regulated by light and activated by cAMP.

The protein localises to the membrane. The enzyme catalyses L-threonyl-[rhodopsin] + ATP = O-phospho-L-threonyl-[rhodopsin] + ADP + H(+). It carries out the reaction L-seryl-[rhodopsin] + ATP = O-phospho-L-seryl-[rhodopsin] + ADP + H(+). Inhibited by phosphorylation of Ser-36. Retina-specific kinase involved in the shutoff of the photoresponse and adaptation to changing light conditions via cone opsin phosphorylation, including rhodopsin (RHO). The sequence is that of Rhodopsin kinase GRK7 (GRK7) from Bos taurus (Bovine).